A 137-amino-acid polypeptide reads, in one-letter code: Phosphoribosyl-AMP cyclohydrolase (137 aa).

Asp84 provides a ligand contact to Mg(2+). Cys85 contributes to the Zn(2+) binding site. Residues Asp86 and Asp88 each contribute to the Mg(2+) site. Positions 101 and 108 each coordinate Zn(2+).

This sequence belongs to the PRA-CH family. As to quaternary structure, homodimer. Mg(2+) serves as cofactor. Requires Zn(2+) as cofactor.

Its subcellular location is the cytoplasm. It catalyses the reaction 1-(5-phospho-beta-D-ribosyl)-5'-AMP + H2O = 1-(5-phospho-beta-D-ribosyl)-5-[(5-phospho-beta-D-ribosylamino)methylideneamino]imidazole-4-carboxamide. It participates in amino-acid biosynthesis; L-histidine biosynthesis; L-histidine from 5-phospho-alpha-D-ribose 1-diphosphate: step 3/9. Functionally, catalyzes the hydrolysis of the adenine ring of phosphoribosyl-AMP. This Chlorobium phaeobacteroides (strain DSM 266 / SMG 266 / 2430) protein is Phosphoribosyl-AMP cyclohydrolase.